The chain runs to 191 residues: Protein YceI (191 aa).

Residues 1–22 (MKKSLLGLTFASLMFSAGSAVA) form the signal peptide.

Belongs to the UPF0312 family. Type 1 subfamily.

The protein resides in the periplasm. This is Protein YceI from Escherichia coli O17:K52:H18 (strain UMN026 / ExPEC).